The chain runs to 121 residues: Class I hydrophobin 2 (121 aa).

A signal peptide spans 1–18 (MQFTTIVMTLAAAVAVTA). Intrachain disulfides connect cysteine 52-cysteine 101, cysteine 60-cysteine 94, cysteine 61-cysteine 79, and cysteine 102-cysteine 116. An N-linked (GlcNAc...) asparagine glycan is attached at asparagine 83.

This sequence belongs to the fungal hydrophobin family. Self-assembles to form functional amyloid fibrils called rodlets. Self-assembly into fibrillar rodlets occurs spontaneously at hydrophobic:hydrophilic interfaces and the rodlets further associate laterally to form amphipathic monolayers. In terms of tissue distribution, expressed in conidia and aerial hyphae.

It is found in the secreted. Its subcellular location is the cell wall. In terms of biological role, aerial growth, conidiation, and dispersal of filamentous fungi in the environment rely upon a capability of their secreting small amphipathic proteins called hydrophobins (HPBs) with low sequence identity. Class I can self-assemble into an outermost layer of rodlet bundles on aerial cell surfaces, conferring cellular hydrophobicity that supports fungal growth, development and dispersal; whereas Class II form highly ordered films at water-air interfaces through intermolecular interactions but contribute nothing to the rodlet structure. Hcf-2 is a class I hydrophobin that is not necessary for the development of hyphae or conidia but contributes to cell surface hydrophobicity. This chain is Class I hydrophobin 2, found in Passalora fulva (Tomato leaf mold).